The sequence spans 119 residues: Ribonuclease P protein component (119 aa).

Belongs to the RnpA family. As to quaternary structure, consists of a catalytic RNA component (M1 or rnpB) and a protein subunit.

It catalyses the reaction Endonucleolytic cleavage of RNA, removing 5'-extranucleotides from tRNA precursor.. In terms of biological role, RNaseP catalyzes the removal of the 5'-leader sequence from pre-tRNA to produce the mature 5'-terminus. It can also cleave other RNA substrates such as 4.5S RNA. The protein component plays an auxiliary but essential role in vivo by binding to the 5'-leader sequence and broadening the substrate specificity of the ribozyme. This Streptococcus pyogenes serotype M1 protein is Ribonuclease P protein component.